A 1378-amino-acid polypeptide reads, in one-letter code: Carboxypeptidase D (1378 aa).

Positions 1–37 are cleaved as a signal peptide; that stretch reads MASGWDERPPWRLESLRLLPPPPLLLLLLLLRSSAQA. Residues 38 to 1297 are Extracellular-facing; that stretch reads AHIKKAEATT…DNRIFGLPRE (1260 aa). The Peptidase M14 1 domain occupies 62–380; that stretch reads HYYHEAALGE…ESLITLIEKV (319 aa). Zn(2+) contacts are provided by H139 and E142. The short motif at 162–164 is the Cell attachment site element; it reads RGD. Residues N172 and N217 are each glycosylated (N-linked (GlcNAc...) asparagine). A disordered region spans residues 189-232; the sequence is RAREGDCGLGDSGPPGTSGRDNSRGRDLNRSFPDQFSTGEPPSL. Zn(2+) is bound at residue H257. The residue at position 265 (Y265) is a Phosphotyrosine. A Phosphoserine modification is found at S270. E350 (proton donor/acceptor) is an active-site residue. Residues N399, N410, N429, and N522 are each glycosylated (N-linked (GlcNAc...) asparagine). One can recognise a Peptidase M14 2 domain in the interval 502–792; the sequence is HHHHFPDMEI…RSLIQFMKQV (291 aa). Residues H564 and E567 each contribute to the Zn(2+) site. The N-linked (GlcNAc...) asparagine glycan is linked to N626. Position 671 (H671) interacts with Zn(2+). E762 functions as the Proton donor/acceptor in the catalytic mechanism. N-linked (GlcNAc...) asparagine glycosylation is found at N811, N855, N867, N879, N953, and N976. Positions 875–898 are disordered; sequence TDANNESKKGKGHSTSTDDTSDPT. Residues 930 to 1209 form the Peptidase M14 3 domain; sequence RYHSYKDLSE…KSLLSMLVEV (280 aa). Residues 1039–1048 are compositionally biased toward basic and acidic residues; sequence RERAQEKDCT. Residues 1039–1068 form a disordered region; that stretch reads RERAQEKDCTSKTGHTNARGRDLDTDFTSN. 2 N-linked (GlcNAc...) asparagine glycosylation sites follow: N1068 and N1140. A helical transmembrane segment spans residues 1298-1318; it reads LVVTVSGATMSALILTACIIW. 3 S-palmitoyl cysteine lipidation sites follow: C1315, C1319, and C1321. Residues 1319–1378 lie on the Cytoplasmic side of the membrane; it reads CICSIKSNRHKDGFHRLRQHHDEYEDEIRMMSTGSKKSLLSHEFQDETDTEEETLYSSKH. Phosphoserine is present on residues S1356 and S1359. Positions 1357 to 1378 are disordered; it reads LLSHEFQDETDTEEETLYSSKH. A phosphothreonine mark is found at T1366 and T1368.

Belongs to the peptidase M14 family. Requires Zn(2+) as cofactor. In terms of tissue distribution, isoform 1 is widely expressed with highest levels in the hippocampus, spinal cord, atrium, colon, testis and ovaries. Detected in the liver of females but not males. Isoform 2 is not detected in brain or lung.

Its subcellular location is the cell membrane. The protein localises to the nucleus. It carries out the reaction Releases C-terminal Arg and Lys from polypeptides.. The polypeptide is Carboxypeptidase D (Rattus norvegicus (Rat)).